The sequence spans 337 residues: MTLPPSCRWSGDHLELLDQRQLPGAVVFMQLRRWQQVAEAISSMAVRGAPAIGIAAAWGVVLAARSGDDLLTAFRGLRASRPTAVNLRWALNRMQAAMGSSASVDVEALTDAAAALQREDCVLTQRLVDHGVSLLAQGCRVLHHCHTGAIATGGVGTALGVIAAAHARGLLRHAWLDETRPRLQGAALSAWELGCLGVPCTVIVDGASGLLMRRGEVDAVMVGCDRVSANGDVANKIGTYNLALVARAHGIPFYVCAPGSSIDRATVDGEAITIEERDAEEITHVRGMDVAAPGAQVWNPAFDITPAHLVTGFITEFGVLRPPYREVLSELPLPNQL.

Residues arginine 47–alanine 49, arginine 81, and glutamine 184 contribute to the substrate site. Catalysis depends on aspartate 225, which acts as the Proton donor. Position 235-236 (asparagine 235–lysine 236) interacts with substrate.

Belongs to the eIF-2B alpha/beta/delta subunits family. MtnA subfamily.

It carries out the reaction 5-(methylsulfanyl)-alpha-D-ribose 1-phosphate = 5-(methylsulfanyl)-D-ribulose 1-phosphate. It functions in the pathway amino-acid biosynthesis; L-methionine biosynthesis via salvage pathway; L-methionine from S-methyl-5-thio-alpha-D-ribose 1-phosphate: step 1/6. Its function is as follows. Catalyzes the interconversion of methylthioribose-1-phosphate (MTR-1-P) into methylthioribulose-1-phosphate (MTRu-1-P). The polypeptide is Methylthioribose-1-phosphate isomerase (Synechococcus sp. (strain CC9605)).